The following is a 174-amino-acid chain: Probable nicotinate-nucleotide adenylyltransferase (174 aa).

It belongs to the NadD family.

It carries out the reaction nicotinate beta-D-ribonucleotide + ATP + H(+) = deamido-NAD(+) + diphosphate. It functions in the pathway cofactor biosynthesis; NAD(+) biosynthesis; deamido-NAD(+) from nicotinate D-ribonucleotide: step 1/1. Functionally, catalyzes the reversible adenylation of nicotinate mononucleotide (NaMN) to nicotinic acid adenine dinucleotide (NaAD). The chain is Probable nicotinate-nucleotide adenylyltransferase from Helicobacter pylori (strain HPAG1).